Reading from the N-terminus, the 710-residue chain is F-box only protein 40 (710 aa).

A TRAF-type zinc finger spans residues 53-114 (EHTLLCPLEQ…VDSETFLHEN (62 aa)). Disordered stretches follow at residues 152–174 (DATE…GAVG) and 234–279 (GSLG…SQEL). Basic and acidic residues predominate over residues 238–248 (KSEDKNGDVAG). The F-box domain occupies 572 to 626 (LNSLTSLPLEVLQYIAGFLDSISLSQLSQVSVLMRNICATLLQERGMVLSQWKKK).

Directly interacts with SKP1 and CUL1. In terms of tissue distribution, expressed only in heart and skeletal muscle.

The protein localises to the cytoplasm. Probable substrate-recognition component of the SCF (SKP1-CUL1-F-box protein)-type E3 ubiquitin ligase complex that may function in myogenesis. This Mus musculus (Mouse) protein is F-box only protein 40 (Fbxo40).